The chain runs to 350 residues: Probable sugar phosphate/phosphate translocator At4g32390 (350 aa).

10 consecutive transmembrane segments (helical) span residues 15-35 (ILLS…VIVY), 49-69 (FPIT…VILI), 89-109 (VVPI…AYIY), 112-132 (VSFI…IGVL), 146-166 (MLSI…FDTW), 168-188 (VMLQ…IQIL), 205-225 (VAPC…LPIL), 235-255 (FVIF…VFLL), 263-283 (TMNV…WSVI), and 286-306 (TVTP…AYYN). Positions 38 to 155 (YILDKKMYNW…MLSISFGVAI (118 aa)) constitute an EamA domain. The tract at residues 324-350 (QGDEEEAGKLLEERESEAAAKRNETED) is disordered.

It belongs to the TPT transporter family. TPT (TC 2.A.7.9) subfamily.

The protein localises to the membrane. The protein is Probable sugar phosphate/phosphate translocator At4g32390 of Arabidopsis thaliana (Mouse-ear cress).